A 500-amino-acid chain; its full sequence is Histidine ammonia-lyase (500 aa).

A cross-link (5-imidazolinone (Ala-Gly)) is located at residues 141–143; that stretch reads ASG. Position 142 is a 2,3-didehydroalanine (Ser) (S142).

The protein belongs to the PAL/histidase family. In terms of processing, contains an active site 4-methylidene-imidazol-5-one (MIO), which is formed autocatalytically by cyclization and dehydration of residues Ala-Ser-Gly.

Its subcellular location is the cytoplasm. The catalysed reaction is L-histidine = trans-urocanate + NH4(+). It functions in the pathway amino-acid degradation; L-histidine degradation into L-glutamate; N-formimidoyl-L-glutamate from L-histidine: step 1/3. The sequence is that of Histidine ammonia-lyase from Shouchella clausii (strain KSM-K16) (Alkalihalobacillus clausii).